Here is a 352-residue protein sequence, read N- to C-terminus: Holliday junction branch migration complex subunit RuvB (352 aa).

Positions 4–185 (ADRLIAATGP…FGIVQRLEFY (182 aa)) are large ATPase domain (RuvB-L). ATP is bound by residues Ile24, Arg25, Gly66, Lys69, Thr70, Thr71, 132 to 134 (EDF), Arg175, Tyr185, and Arg222. Mg(2+) is bound at residue Thr70. Positions 186–256 (STADLATIVS…IADLALNLLD (71 aa)) are small ATPAse domain (RuvB-S). Positions 259 to 352 (ERGFDHQDRR…VDEFLDAVDD (94 aa)) are head domain (RuvB-H). DNA-binding residues include Arg295, Arg314, and Arg319.

It belongs to the RuvB family. Homohexamer. Forms an RuvA(8)-RuvB(12)-Holliday junction (HJ) complex. HJ DNA is sandwiched between 2 RuvA tetramers; dsDNA enters through RuvA and exits via RuvB. An RuvB hexamer assembles on each DNA strand where it exits the tetramer. Each RuvB hexamer is contacted by two RuvA subunits (via domain III) on 2 adjacent RuvB subunits; this complex drives branch migration. In the full resolvosome a probable DNA-RuvA(4)-RuvB(12)-RuvC(2) complex forms which resolves the HJ.

It is found in the cytoplasm. The catalysed reaction is ATP + H2O = ADP + phosphate + H(+). The RuvA-RuvB-RuvC complex processes Holliday junction (HJ) DNA during genetic recombination and DNA repair, while the RuvA-RuvB complex plays an important role in the rescue of blocked DNA replication forks via replication fork reversal (RFR). RuvA specifically binds to HJ cruciform DNA, conferring on it an open structure. The RuvB hexamer acts as an ATP-dependent pump, pulling dsDNA into and through the RuvAB complex. RuvB forms 2 homohexamers on either side of HJ DNA bound by 1 or 2 RuvA tetramers; 4 subunits per hexamer contact DNA at a time. Coordinated motions by a converter formed by DNA-disengaged RuvB subunits stimulates ATP hydrolysis and nucleotide exchange. Immobilization of the converter enables RuvB to convert the ATP-contained energy into a lever motion, pulling 2 nucleotides of DNA out of the RuvA tetramer per ATP hydrolyzed, thus driving DNA branch migration. The RuvB motors rotate together with the DNA substrate, which together with the progressing nucleotide cycle form the mechanistic basis for DNA recombination by continuous HJ branch migration. Branch migration allows RuvC to scan DNA until it finds its consensus sequence, where it cleaves and resolves cruciform DNA. This is Holliday junction branch migration complex subunit RuvB from Pseudomonas fluorescens (strain ATCC BAA-477 / NRRL B-23932 / Pf-5).